We begin with the raw amino-acid sequence, 633 residues long: MINVYFSDNSCKQFLPGIKGSDIITHLFPELLNKAIAIKINDKSLDLSTEITEDCKFEVITLDSDEGLDIIRHDTAHIMAQAIKEMFPEVKTVVGPTIKDGFYYDFSTDHIFSSNELEKIEEKMREIIKKNESFIREVWTREEAIRFFSNKGEDYKVKIIAKIPIHENITVYKQGSFIDLCRGPHAPSTKISKAFKLTKVSGSYWEGNTNNAQLQRIYGTAWRTEEELKLYLNNLIEVEKRDHRKIGKELELFHIQNEALGQIFWHEKGLIIYRIIENYIRKKLENNGYIEVKTPYLLSKTLWEQSGHWDKFREHMFLSEIDNKVVAIKPMNCPCHVQIFNSKIRSYKDLPLRMAEFGTCHRYESSGALHGLMRVRSFTQDDAHIFCTEDQIIEEALKFCNLLMEVYEVFGFKDILVKFSDRPEKRAGSDKIWDKAEEALKASVKAANLNYVLNPGDGAFYGPKLEFTLKDAIGREWQCGTLQMDFVLPERLGAYYTGSDGKKHHPIMLHRAILGTIERFIGILIEHHSGKLPIWLAPVQLSILTITEDAIDYAISLKHKAMKQNIRAEVDITNEKINYKIRSHISKKIPVLWIIGKKEIETESVSIRYLESKDQHIMSSDKALKTLLSCASI.

The TGS domain occupies 1–61 (MINVYFSDNS…TEDCKFEVIT (61 aa)). The catalytic stretch occupies residues 242–533 (DHRKIGKELE…LIEHHSGKLP (292 aa)). Positions 333, 384, and 510 each coordinate Zn(2+).

It belongs to the class-II aminoacyl-tRNA synthetase family. As to quaternary structure, homodimer. Zn(2+) is required as a cofactor.

It localises to the cytoplasm. The catalysed reaction is tRNA(Thr) + L-threonine + ATP = L-threonyl-tRNA(Thr) + AMP + diphosphate + H(+). Its function is as follows. Catalyzes the attachment of threonine to tRNA(Thr) in a two-step reaction: L-threonine is first activated by ATP to form Thr-AMP and then transferred to the acceptor end of tRNA(Thr). Also edits incorrectly charged L-seryl-tRNA(Thr). The polypeptide is Threonine--tRNA ligase (Ehrlichia ruminantium (strain Welgevonden)).